Reading from the N-terminus, the 77-residue chain is Surfactant-associated protein 2 (77 aa).

Positions 1 to 19 (MESLMRLFLLLALLSSSHA) are cleaved as a signal peptide. The N-linked (GlcNAc...) asparagine glycan is linked to N61.

In terms of processing, N-glycosylated. As to expression, expressed in lung, and specifically in alveolar type II epithelial cells.

Its subcellular location is the secreted. The protein localises to the cytoplasmic vesicle. The protein resides in the secretory vesicle. It is found in the golgi apparatus. Its function is as follows. Putative surfactant protein. This is Surfactant-associated protein 2 from Mus musculus (Mouse).